Here is a 253-residue protein sequence, read N- to C-terminus: MSGHNKWANIKHRKMAQDAKKSQLFTKLIRELIVAAREGGGDPETNSRLRTAIEKAKEANMPRENIEKAIKRGTGELEGVEYQEIIYEAYGPGGVALYIRALTDNKNRTAQELRHVLSRHGGSLADLGAVGWIFERKGIISVPRDQVANVEELVMMAIDAGAEDIDDQDDPVRITTSPDNLMSVKEELEKNGYKAEAGISYVPKNTVQVTGKDAEKILALLNALEDMDDVQDVYSNFEMDDAEMEAILSQMNQ.

The protein belongs to the TACO1 family.

The protein localises to the cytoplasm. This chain is Probable transcriptional regulatory protein Tlet_1011, found in Pseudothermotoga lettingae (strain ATCC BAA-301 / DSM 14385 / NBRC 107922 / TMO) (Thermotoga lettingae).